The following is a 336-amino-acid chain: Type II methyltransferase M2.HphI (336 aa).

The protein belongs to the N(4)/N(6)-methyltransferase family.

It catalyses the reaction a 2'-deoxyadenosine in DNA + S-adenosyl-L-methionine = an N(6)-methyl-2'-deoxyadenosine in DNA + S-adenosyl-L-homocysteine + H(+). In terms of biological role, an alpha subtype methylase that recognizes the double-stranded sequence 5'-GGTGA-3', probably methylates A-5 on the top strand, and protects the DNA from cleavage by the HphI endonuclease. The polypeptide is Type II methyltransferase M2.HphI (hphIBM) (Haemophilus parahaemolyticus).